The sequence spans 203 residues: Protein ILM1 (203 aa).

At 1 to 3 (MAQ) the chain is on the cytoplasmic side. Residues 4-24 (ALNSTNIAFFRVAFLFTIAFF) traverse the membrane as a helical segment. Residues 25–58 (CLKNVNSILQNTYFIVLTQAMNLPQLTLSRYSGQ) are Lumenal-facing. Residues 59–79 (LGLFALLFTLNGVHDLIPLLE) traverse the membrane as a helical segment. Over 80-92 (NNVKYFQSVVPVR) the chain is Cytoplasmic. A helical transmembrane segment spans residues 93 to 113 (LLIFFILTSISYLWESNFYVH). Position 114 (Asn-114) is a topological domain, lumenal. Residues 115 to 135 (NSVFIYCFAEVWINFLLYNAI) form a helical membrane-spanning segment. Topologically, residues 136-203 (REEKNEEFKR…KGNDDSDAKK (68 aa)) are cytoplasmic. The segment covering 175–187 (INDEENDDEDGKD) has biased composition (acidic residues). The segment at 175-203 (INDEENDDEDGKDNDDNNEKGNDDSDAKK) is disordered. The segment covering 188–203 (NDDNNEKGNDDSDAKK) has biased composition (basic and acidic residues).

Belongs to the ILM1 family.

The protein resides in the endoplasmic reticulum membrane. The protein is Protein ILM1 (ILM1) of Saccharomyces cerevisiae (strain ATCC 204508 / S288c) (Baker's yeast).